The sequence spans 177 residues: Interleukin-1 receptor antagonist protein (177 aa).

Positions 1-25 (MRPSRSTRRHLISLLLFLFHSETAC) are cleaved as a signal peptide. C91 and C141 are oxidised to a cystine. Residue N109 is glycosylated (N-linked (GlcNAc...) asparagine).

It belongs to the IL-1 family.

It is found in the secreted. Functionally, anti-inflammatory antagonist of interleukin-1 family of proinflammatory cytokines such as interleukin-1beta/IL1B and interleukin-1alpha/IL1A. Protects from immune dysregulation and uncontrolled systemic inflammation triggered by IL1 for a range of innate stimulatory agents such as pathogens. The polypeptide is Interleukin-1 receptor antagonist protein (IL1RN) (Oryctolagus cuniculus (Rabbit)).